A 421-amino-acid polypeptide reads, in one-letter code: MENMFRLMASEEYFSERRCVWVNGPVIVGAGPSGLATAACLHDQGVPFVVVERSDCIASLWQKRTYDRLKLHLPKKFCQLPKMPFPDHYPEYPTKRQFIDYLESYANRFDIKPEFNKSVESARFDETSGLWRVRTTSDGEEMEYICRWLVVATGENAERVVPEINGLMTEFDGEVIHACEYKSGEKFRGKRVLVVGCGNSGMEVSLDLANHNAITSMVVRSSVHVLPREIMGKSTFGISVMMMKWLPLWLVDKLLLILSWLVLGSLSNYGLKRPDIGPMELKSMTGKTPVLDIGALEKIKSGDVEIVPAIKQFSRHHVELVDGQKLDIDAVVLATGYRSNVPSWLQESEFFSKNGFPKSPFPNAWKGKSGLYAAGFTRKGLAGASVDAVNIAQDIGNVWREETKRQKMRRNVGHRRCISVA.

An FAD-binding site is contributed by 29 to 34 (GAGPSG). 196 to 201 (GCGNSG) is a binding site for NADP(+).

The protein belongs to the FMO family. FAD is required as a cofactor.

It catalyses the reaction indole-3-pyruvate + NADPH + O2 + H(+) = (indol-3-yl)acetate + CO2 + NADP(+) + H2O. The protein operates within plant hormone metabolism; auxin biosynthesis. In terms of biological role, involved in auxin biosynthesis. Belongs to the set of redundant YUCCA genes probably responsible for auxin biosynthesis in roots. This is Probable indole-3-pyruvate monooxygenase YUCCA9 (YUC9) from Arabidopsis thaliana (Mouse-ear cress).